The following is a 223-amino-acid chain: Cytochrome c biogenesis ATP-binding export protein CcmA (223 aa).

An ABC transporter domain is found at 20–222 (LAAHALTYSR…PTRLLHLKKA (203 aa)). 52–59 (GPNGIGKT) contributes to the ATP binding site.

Belongs to the ABC transporter superfamily. CcmA exporter (TC 3.A.1.107) family. In terms of assembly, the complex is composed of two ATP-binding proteins (CcmA) and two transmembrane proteins (CcmB).

The protein localises to the cell inner membrane. The catalysed reaction is heme b(in) + ATP + H2O = heme b(out) + ADP + phosphate + H(+). In terms of biological role, part of the ABC transporter complex CcmAB involved in the biogenesis of c-type cytochromes; once thought to export heme, this seems not to be the case, but its exact role is uncertain. Responsible for energy coupling to the transport system. This is Cytochrome c biogenesis ATP-binding export protein CcmA from Xylella fastidiosa (strain 9a5c).